The chain runs to 414 residues: Zinc metalloproteinase nas-26 (414 aa).

The signal sequence occupies residues 1-20 (MTSSLVLILAPLALVAIGEA). A propeptide spanning residues 21-61 (AFGNSSKIFEIPGLEVMASDKYPHFTTIETVSRTKVHRHRR) is cleaved from the precursor. Asn24 is a glycosylation site (N-linked (GlcNAc...) asparagine). The Peptidase M12A domain occupies 62-264 (EVIAGQIYDW…AKVINDIYCP (203 aa)). 6 disulfide bridges follow: Cys103-Cys263, Cys126-Cys146, Cys267-Cys286, Cys289-Cys300, Cys308-Cys331, and Cys358-Cys378. A Zn(2+)-binding site is contributed by His154. Glu155 is an active-site residue. Zn(2+) contacts are provided by His158 and His164. One can recognise an EGF-like domain in the interval 251–307 (AFLDAKVINDIYCPNACQGRNHLNCLAGGYPDPNNCNVCRCPEGLGGPDCGRLQPSP). The CUB domain occupies 308-414 (CGGEIHASDQ…RFSLRFRRQA (107 aa)).

Requires Zn(2+) as cofactor.

It localises to the secreted. Functionally, metalloprotease. This Caenorhabditis elegans protein is Zinc metalloproteinase nas-26 (toh-1).